Consider the following 256-residue polypeptide: Thiazole synthase (256 aa).

Catalysis depends on Lys96, which acts as the Schiff-base intermediate with DXP. 1-deoxy-D-xylulose 5-phosphate contacts are provided by residues Gly157, 184-185, and 206-207; these read AG and NT.

Belongs to the ThiG family. In terms of assembly, homotetramer. Forms heterodimers with either ThiH or ThiS.

The protein resides in the cytoplasm. The catalysed reaction is [ThiS sulfur-carrier protein]-C-terminal-Gly-aminoethanethioate + 2-iminoacetate + 1-deoxy-D-xylulose 5-phosphate = [ThiS sulfur-carrier protein]-C-terminal Gly-Gly + 2-[(2R,5Z)-2-carboxy-4-methylthiazol-5(2H)-ylidene]ethyl phosphate + 2 H2O + H(+). Its pathway is cofactor biosynthesis; thiamine diphosphate biosynthesis. In terms of biological role, catalyzes the rearrangement of 1-deoxy-D-xylulose 5-phosphate (DXP) to produce the thiazole phosphate moiety of thiamine. Sulfur is provided by the thiocarboxylate moiety of the carrier protein ThiS. In vitro, sulfur can be provided by H(2)S. This is Thiazole synthase from Bartonella tribocorum (strain CIP 105476 / IBS 506).